The primary structure comprises 665 residues: Protein LOW PHOTOSYNTHETIC EFFICIENCY 1, chloroplastic (665 aa).

A chloroplast-targeting transit peptide spans 1–68 (MQALSILPLK…VSSNRKVLFL (68 aa)). 13 PPR repeats span residues 145-179 (PLQV…KSES), 181-217 (GVIG…GIVP), 218-252 (NIVT…GFEP), 253-283 (NPIT…LREK), 309-344 (GRIC…GVRP), 345-375 (SREE…IRER), 380-414 (SLSV…GPEP), 422-456 (VVSH…GLKP), 457-491 (QRRH…GEKP), 492-526 (TVIS…GIEP), 527-561 (NLYA…GIEP), 562-596 (SVVT…NVEP), and 597-631 (NEIT…GLKL).

The protein belongs to the PPR family. P subfamily. As to quaternary structure, interacts with HCF173.

It localises to the plastid. It is found in the chloroplast thylakoid membrane. Its subcellular location is the chloroplast stroma. Required for light-regulated photosystem II (PSII) biogenesis and grana thylakoids formation by binding to the 5' UTR of PSII subunit mRNAs (e.g. psbJ, psbN and psbA) in a light-dependent manner through a redox-based mechanism, and facilitating the association of HCF173 with target mRNAs, which encodes PSII reaction center proteins (e.g. J, N and D1), thus regulating its expression by modulating ribosome loading. The chain is Protein LOW PHOTOSYNTHETIC EFFICIENCY 1, chloroplastic from Arabidopsis thaliana (Mouse-ear cress).